The primary structure comprises 380 residues: Protein neprosin (380 aa).

Positions 1 to 24 (MQAKFFTFVILSSVFYFNYPLAEA) are cleaved as a signal peptide. The propeptide at 25–128 (RSIQARLANK…QFPNLKFAPP (104 aa)) is activation peptide. Residues Cys52 and Cys98 are joined by a disulfide bond. Residues Asn68, Asn145, and Asn152 are each glycosylated (N-linked (GlcNAc...) asparagine). One can recognise a Neprosin PEP catalytic domain in the interval 129-380 (SANTNHQYAV…YLFYGGPGCQ (252 aa)). Residue Glu188 is part of the active site. Cys219 and Cys224 are oxidised to a cystine. Asn253 carries an N-linked (GlcNAc...) asparagine glycan. Glu297 is an active-site residue. Cys358 and Cys379 are oxidised to a cystine.

Belongs to the peptidase G3 family.

It localises to the secreted. The enzyme catalyses Hydrolysis of Pro-|-Xaa &gt;&gt; Ala-|-Xaa in oligopeptides.. With respect to regulation, weakly inhibited by the aspartic protease inhibitor pepstatin. Weakly inhibited by pepstatin A (IC(50) of 140 uM) and 1,2-epoxy-3-(p-nitrophenoxy)propane (EPNP) (IC(50) of 480 uM). Activity is not affected by the POP inhibitor Z-Pro-prolinal inhibitor or the denaturant urea. Glutamic endopeptidase that preferentially cleaves peptide bonds on the C-terminal side of proline residues. Also cleaves peptide bonds on the C-terminal side of alanine residues but with less efficiency. In contrast to most proline-cleaving enzymes, effectively degrades proteins of any size. Found in the viscoelastic fluid of the pitcher, and so likely functions in the digestion of their prey. This is Protein neprosin from Nepenthes x ventrata (Red tropical pitcher plant).